Here is a 313-residue protein sequence, read N- to C-terminus: Aspartate carbamoyltransferase catalytic subunit (313 aa).

Carbamoyl phosphate contacts are provided by arginine 55 and threonine 56. Lysine 83 provides a ligand contact to L-aspartate. Carbamoyl phosphate-binding residues include arginine 105, histidine 138, and glutamine 141. L-aspartate is bound by residues arginine 171 and arginine 225. Carbamoyl phosphate is bound by residues glycine 266 and proline 267.

This sequence belongs to the aspartate/ornithine carbamoyltransferase superfamily. ATCase family. As to quaternary structure, heterododecamer (2C3:3R2) of six catalytic PyrB chains organized as two trimers (C3), and six regulatory PyrI chains organized as three dimers (R2).

The enzyme catalyses carbamoyl phosphate + L-aspartate = N-carbamoyl-L-aspartate + phosphate + H(+). The protein operates within pyrimidine metabolism; UMP biosynthesis via de novo pathway; (S)-dihydroorotate from bicarbonate: step 2/3. In terms of biological role, catalyzes the condensation of carbamoyl phosphate and aspartate to form carbamoyl aspartate and inorganic phosphate, the committed step in the de novo pyrimidine nucleotide biosynthesis pathway. The protein is Aspartate carbamoyltransferase catalytic subunit of Corynebacterium diphtheriae (strain ATCC 700971 / NCTC 13129 / Biotype gravis).